The primary structure comprises 505 residues: MAESAGASSFFPLVVLLLAGSGGSGPRGIQALLCACTSCLQTNYTCETDGACMVSIFNLDGVEHHVRTCIPKVELVPAGKPFYCLSSEDLRNTHCCYIDFCNKIDLRVPSGHLKEPAHPSMWGPVELVGIIAGPVFLLFLIIIIVFLVINYHQRVYHNRQRLDMEDPSCEMCLSKDKTLQDLVYDLSTSGSGSGLPLFVQRTVARTIVLQEIIGKGRFGEVWRGRWRGGDVAVKIFSSREERSWFREAEIYQTVMLRHENILGFIAADNKDNGTWTQLWLVSDYHEHGSLFDYLNRYTVTIEGMIKLALSAASGLAHLHMEIVGTQGKPGIAHRDLKSKNILVKKNGMCAIADLGLAVRHDAVTDTIDIAPNQRVGTKRYMAPEVLDETINMKHFDSFKCADIYALGLVYWEIARRCNSGGVHEDYQLPYYDLVPSDPSIEEMRKVVCDQKLRPNVPNWWQSYEALRVMGKMMRECWYANGAARLTALRIKKTLSQLSVQEDVKI.

A signal peptide spans 1–23 (MAESAGASSFFPLVVLLLAGSGG). Residues 24–126 (SGPRGIQALL…AHPSMWGPVE (103 aa)) are Extracellular-facing. N43 is a glycosylation site (N-linked (GlcNAc...) asparagine). Residues 127–149 (LVGIIAGPVFLLFLIIIIVFLVI) form a helical membrane-spanning segment. The Cytoplasmic portion of the chain corresponds to 150–505 (NYHQRVYHNR…QLSVQEDVKI (356 aa)). Residues 177–206 (KTLQDLVYDLSTSGSGSGLPLFVQRTVART) form the GS domain. Positions 207 to 497 (IVLQEIIGKG…LRIKKTLSQL (291 aa)) constitute a Protein kinase domain. ATP contacts are provided by residues 213-221 (IGKGRFGEV) and K234. D335 acts as the Proton acceptor in catalysis. The residue at position 380 (Y380) is a Phosphotyrosine.

This sequence belongs to the protein kinase superfamily. TKL Ser/Thr protein kinase family. TGFB receptor subfamily. Forms an activin receptor complex with activin receptor type-2 (ACVR2A or ACVR2B). Part of a complex consisting of MAGI2/ARIP1, ACVR2A, ACVR1B and SMAD3. Interacts with SMAD2 and SMAD3. Interacts with SMAD7. Interacts with FKBP1A. Interacts with IGSF1. Interacts with CRIPTO. Interacts with TDP2. Interacts with TSC22D1/TSC-22. In terms of processing, autophosphorylated. Phosphorylated by activin receptor type-2 (ACVR2A or ACVR2B) in response to activin-binding at serine and threonine residues in the GS domain. Phosphorylation of ACVR1B by activin receptor type-2 regulates association with SMAD7. Post-translationally, ubiquitinated. Level of ubiquitination is regulated by the SMAD7-SMURF1 complex. Ubiquitinated.

The protein localises to the cell membrane. It carries out the reaction L-threonyl-[receptor-protein] + ATP = O-phospho-L-threonyl-[receptor-protein] + ADP + H(+). It catalyses the reaction L-seryl-[receptor-protein] + ATP = O-phospho-L-seryl-[receptor-protein] + ADP + H(+). Activin receptor type-2 (ACVR2A or ACVR2B) activates the type-1 receptor through phosphorylation of its regulatory GS domain. Its function is as follows. Transmembrane serine/threonine kinase activin type-1 receptor forming an activin receptor complex with activin receptor type-2 (ACVR2A or ACVR2B). Transduces the activin signal from the cell surface to the cytoplasm and is thus regulating a many physiological and pathological processes including neuronal differentiation and neuronal survival, hair follicle development and cycling, FSH production by the pituitary gland, wound healing, extracellular matrix production, immunosuppression and carcinogenesis. Activin is also thought to have a paracrine or autocrine role in follicular development in the ovary. Within the receptor complex, type-2 receptors (ACVR2A and/or ACVR2B) act as a primary activin receptors whereas the type-1 receptors like ACVR1B act as downstream transducers of activin signals. Activin binds to type-2 receptor at the plasma membrane and activates its serine-threonine kinase. The activated receptor type-2 then phosphorylates and activates the type-1 receptor such as ACVR1B. Once activated, the type-1 receptor binds and phosphorylates the SMAD proteins SMAD2 and SMAD3, on serine residues of the C-terminal tail. Soon after their association with the activin receptor and subsequent phosphorylation, SMAD2 and SMAD3 are released into the cytoplasm where they interact with the common partner SMAD4. This SMAD complex translocates into the nucleus where it mediates activin-induced transcription. Inhibitory SMAD7, which is recruited to ACVR1B through FKBP1A, can prevent the association of SMAD2 and SMAD3 with the activin receptor complex, thereby blocking the activin signal. Activin signal transduction is also antagonized by the binding to the receptor of inhibin-B via the IGSF1 inhibin coreceptor. ACVR1B also phosphorylates TDP2. This Mus musculus (Mouse) protein is Activin receptor type-1B (Acvr1b).